A 130-amino-acid polypeptide reads, in one-letter code: Large ribosomal subunit protein bL20c (130 aa).

This sequence belongs to the bacterial ribosomal protein bL20 family.

Its subcellular location is the plastid. It localises to the chloroplast. Functionally, binds directly to 23S ribosomal RNA and is necessary for the in vitro assembly process of the 50S ribosomal subunit. It is not involved in the protein synthesizing functions of that subunit. This is Large ribosomal subunit protein bL20c (rpl20) from Glycine max (Soybean).